Here is a 247-residue protein sequence, read N- to C-terminus: PF03932 family protein CutC (247 aa).

This sequence belongs to the CutC family.

The protein resides in the cytoplasm. The chain is PF03932 family protein CutC from Vibrio campbellii (strain ATCC BAA-1116).